Reading from the N-terminus, the 149-residue chain is Ribonuclease pancreatic (149 aa).

The signal sequence occupies residues 1–25 (MGLEKSLILFPLFFLLLGWVQPSLG). Lys32 and Arg35 together coordinate substrate. His37 serves as the catalytic Proton acceptor. 4 disulfides stabilise this stretch: Cys51-Cys109, Cys65-Cys120, Cys83-Cys135, and Cys90-Cys97. Substrate contacts are provided by residues 66 to 70 (KPVNT) and Lys91. His144 functions as the Proton donor in the catalytic mechanism.

Belongs to the pancreatic ribonuclease family. In terms of assembly, monomer. Interacts with and forms tight 1:1 complexes with RNH1. Dimerization of two such complexes may occur. Interaction with RNH1 inhibits this protein. In terms of tissue distribution, pancreas.

Its subcellular location is the secreted. The enzyme catalyses an [RNA] containing cytidine + H2O = an [RNA]-3'-cytidine-3'-phosphate + a 5'-hydroxy-ribonucleotide-3'-[RNA].. It catalyses the reaction an [RNA] containing uridine + H2O = an [RNA]-3'-uridine-3'-phosphate + a 5'-hydroxy-ribonucleotide-3'-[RNA].. Endonuclease that catalyzes the cleavage of RNA on the 3' side of pyrimidine nucleotides. Acts on single-stranded and double-stranded RNA. The polypeptide is Ribonuclease pancreatic (Rnase1) (Mus musculus (Mouse)).